The sequence spans 137 residues: Large ribosomal subunit protein uL16 (137 aa).

This sequence belongs to the universal ribosomal protein uL16 family. In terms of assembly, part of the 50S ribosomal subunit.

In terms of biological role, binds 23S rRNA and is also seen to make contacts with the A and possibly P site tRNAs. In Alcanivorax borkumensis (strain ATCC 700651 / DSM 11573 / NCIMB 13689 / SK2), this protein is Large ribosomal subunit protein uL16.